The sequence spans 434 residues: CBL-interacting protein kinase 15 (434 aa).

The Protein kinase domain occupies 12–267 (YELGRLLGKG…IQKIKESTWF (256 aa)). Residues 18-26 (LGKGTFGKV) and lysine 41 contribute to the ATP site. Aspartate 135 acts as the Proton acceptor in catalysis. The tract at residues 153–182 (DFGLSALSESKRQDGLLHTTCGTPAYVAPE) is activation loop. Residues 298-333 (RKKNAHEDVKPMSVTNLNAFEIISFSKGFDLSGMFI) enclose the NAF domain. Positions 338 to 367 (RNEARFTSDKSASTIISKLEDVAKALNLRV) are PPI.

Belongs to the protein kinase superfamily. CAMK Ser/Thr protein kinase family. SNF1 subfamily. The cofactor is Mn(2+).

It catalyses the reaction L-seryl-[protein] + ATP = O-phospho-L-seryl-[protein] + ADP + H(+). The catalysed reaction is L-threonyl-[protein] + ATP = O-phospho-L-threonyl-[protein] + ADP + H(+). Functionally, involved in salt stress tolerance. CIPK serine-threonine protein kinases interact with CBL proteins. Binding of a CBL protein to the regulatory NAF domain of CIPK protein lead to the activation of the kinase in a calcium-dependent manner. In Oryza sativa subsp. japonica (Rice), this protein is CBL-interacting protein kinase 15 (CIPK15).